Consider the following 318-residue polypeptide: Protein-L-histidine N-pros-methyltransferase (318 aa).

The N-terminal stretch at 1–18 (MRLLAGWLCLSLASVWLA) is a signal peptide. N-linked (GlcNAc...) asparagine glycosylation is present at Asn-35. Positions 174, 210, and 295 each coordinate S-adenosyl-L-homocysteine.

This sequence belongs to the METTL9 family.

It is found in the endoplasmic reticulum. The protein localises to the mitochondrion. It carries out the reaction L-histidyl-[protein] + S-adenosyl-L-methionine = N(pros)-methyl-L-histidyl-[protein] + S-adenosyl-L-homocysteine + H(+). Its function is as follows. Protein-histidine N-methyltransferase that specifically catalyzes 1-methylhistidine (pros-methylhistidine) methylation of target proteins. Specifically methylates the second His of proteins with a His-x-His (HxH) motif (where 'x' is preferably a small amino acid), while exploiting the first one as a recognition signature. Catalyzes methylation of target proteins such as S100A9, NDUFB3, SLC39A5, SLC39A7, ARMC6 and DNAJB12; 1-methylhistidine modification may affect the binding of zinc and other metals to its target proteins. Constitutes the main methyltransferase for the 1-methylhistidine modification in cell. The sequence is that of Protein-L-histidine N-pros-methyltransferase from Homo sapiens (Human).